The following is a 412-amino-acid chain: Vacuolar calcium ion transporter (412 aa).

The Cytoplasmic portion of the chain corresponds to 1–55; the sequence is MIERLKIAKNRLEAMNSFNFPAQDRHERAPLLGSEYDHSMARQLSLLNVVGMTKS. The helical transmembrane segment at 56–76 threads the bilayer; that stretch reads VLMSSYFNLMLVFVPIGLIAG. Residues 77–83 are Lumenal-facing; the sequence is WFEWNAK. The chain crosses the membrane as a helical span at residues 84 to 104; it reads SVFILNMLAIIPLASLLSFAT. The Cytoplasmic segment spans residues 105-114; that stretch reads EQLSIISGPT. The helical transmembrane segment at 115–135 threads the bilayer; the sequence is LGALLNASFGNAIELIVGVLA. The Lumenal portion of the chain corresponds to 136–148; sequence LKRGELRIVQSSL. Residues 149-169 traverse the membrane as a helical segment; that stretch reads LGSILSNLLLVFGMCLVTTGI. Residues 170–177 lie on the Cytoplasmic side of the membrane; sequence RREITTFN. Residues 178–198 form a helical membrane-spanning segment; that stretch reads ITVAQTMIAMLALSTATILIP. Over 199 to 215 the chain is Lumenal; it reads ATFHYSLPDNANSENAL. Residues 216 to 236 traverse the membrane as a helical segment; sequence LHVSRGTAVIVLIVYVLLLVF. The Cytoplasmic segment spans residues 237 to 264; the sequence is QLKTHKHVCHDPSEVEEETEPRILGLRS. The chain crosses the membrane as a helical span at residues 265–285; sequence SIAMLAIVTVFVSLCADYLVG. Residues 286 to 299 lie on the Lumenal side of the membrane; that stretch reads SIDQLVEEVNISKT. A helical membrane pass occupies residues 300–320; sequence FVGLVILPVVGNAAEHVTAIV. Over 321–334 the chain is Cytoplasmic; the sequence is VSYRGQMDLALGVA. A helical membrane pass occupies residues 335–355; sequence IGSSIQIALFLAPFLVIVGWI. The Lumenal portion of the chain corresponds to 356–358; that stretch reads ISQ. Residues 359–379 traverse the membrane as a helical segment; that stretch reads PLTLYFESLETVILFVSVFLV. Residues 380–389 are Cytoplasmic-facing; the sequence is NYLIQDGATH. Residues 390–410 traverse the membrane as a helical segment; the sequence is WLEGVQLLALYAIVVLAFFYY. The Lumenal segment spans residues 411–412; sequence PQ.

Belongs to the Ca(2+):cation antiporter (CaCA) (TC 2.A.19) family.

Its subcellular location is the vacuole membrane. It localises to the endoplasmic reticulum membrane. Its function is as follows. Has a role in promoting intracellular calcium ion sequestration via the exchange of calcium ions for hydrogen ions across the vacuolar membrane. Involved also in manganese ion homeostasis via its uptake into the vacuole. The chain is Vacuolar calcium ion transporter (vcx1) from Schizosaccharomyces pombe (strain 972 / ATCC 24843) (Fission yeast).